The sequence spans 157 residues: MFDVLMYLFESYIHNETEMRVDQDTLTDDLTRAGFDRNDIYSALSWLEKLADIQEGQTAPLYLANDPLAMRIYTQDETLRLDAECRGFLLFLEQIQVLNLETREMVIERVMALETQEFDLEDLKWVILMVLFNVPGCENAYQQMEELLFEVNDGYVQ.

This sequence belongs to the Smg family.

This is Protein Smg from Pectobacterium carotovorum subsp. carotovorum (strain PC1).